The chain runs to 332 residues: T-cell surface glycoprotein CD1c1 (332 aa).

A signal peptide spans 1-17 (MLFLHFLFLDVVLGGSI). Residues 18 to 300 (TENVVQENIS…IILYWGHGLS (283 aa)) are Extracellular-facing. Asn-25, Asn-38, Asn-75, and Asn-146 each carry an N-linked (GlcNAc...) asparagine glycan. 2 disulfides stabilise this stretch: Cys-120–Cys-184 and Cys-224–Cys-279. The Ig-like domain occupies 205 to 292 (PEVWLSSSPN…HSSLRDQDII (88 aa)). The helical transmembrane segment at 301–321 (VILITFAVIVPLVLLIVLMLL) threads the bilayer. Topologically, residues 322 to 332 (YKKRCTYQGIQ) are cytoplasmic.

Heterodimer with B2M (beta-2-microglobulin).

It localises to the cell membrane. Its subcellular location is the endosome membrane. In terms of biological role, antigen-presenting protein that binds self and non-self lipid and glycolipid antigens and presents them to T-cell receptors on natural killer T-cells. In Cavia porcellus (Guinea pig), this protein is T-cell surface glycoprotein CD1c1 (CD1C1).